A 329-amino-acid chain; its full sequence is Beta-ketoacyl-[acyl-carrier-protein] synthase III (329 aa).

Catalysis depends on residues C113 and H255. The tract at residues 256-260 (QANQR) is ACP-binding. N285 is a catalytic residue.

The protein belongs to the thiolase-like superfamily. FabH family. In terms of assembly, homodimer.

Its subcellular location is the cytoplasm. The catalysed reaction is malonyl-[ACP] + acetyl-CoA + H(+) = 3-oxobutanoyl-[ACP] + CO2 + CoA. Its pathway is lipid metabolism; fatty acid biosynthesis. Its function is as follows. Catalyzes the condensation reaction of fatty acid synthesis by the addition to an acyl acceptor of two carbons from malonyl-ACP. Catalyzes the first condensation reaction which initiates fatty acid synthesis and may therefore play a role in governing the total rate of fatty acid production. Possesses both acetoacetyl-ACP synthase and acetyl transacylase activities. Its substrate specificity determines the biosynthesis of branched-chain and/or straight-chain of fatty acids. In Chlorobaculum tepidum (strain ATCC 49652 / DSM 12025 / NBRC 103806 / TLS) (Chlorobium tepidum), this protein is Beta-ketoacyl-[acyl-carrier-protein] synthase III.